A 1015-amino-acid chain; its full sequence is Proline-rich basic protein 1 (1015 aa).

Disordered regions lie at residues 1 to 111 (MLTA…SGEM), 139 to 164 (AFIS…PDGG), 196 to 236 (GAAP…RTGS), 259 to 460 (LSPE…ILSQ), 488 to 678 (DAVE…APAH), 690 to 883 (VVPH…GKVL), and 991 to 1015 (PPLL…LFPL). A compositionally biased stretch (gly residues) spans 84 to 94 (PGSGFPRGPGS). Low complexity predominate over residues 220 to 233 (PRAAGAPRPRLLLR). Over residues 267–276 (SSATFGSTGR) the composition is skewed to polar residues. Composition is skewed to basic and acidic residues over residues 277–304 (SEPE…RVRD), 318–328 (LRERAIRRDKP), and 346–367 (SEEK…DRTV). Over residues 380–391 (PSEVPSRAVRPR) the composition is skewed to low complexity. A compositionally biased stretch (polar residues) spans 531 to 542 (IAFTQEAQNGLT). 2 stretches are compositionally biased toward pro residues: residues 548 to 557 (PPTPSAPGTP) and 691 to 700 (VPHPYEPPEP). Basic and acidic residues predominate over residues 759 to 774 (ENRDVEAQRLVPDGDG). Pro residues predominate over residues 813–825 (GIAPKPKTPPTAP). 2 stretches are compositionally biased toward low complexity: residues 826–835 (EPAAAVQAPL) and 847–858 (APAQPRAASAPP). A compositionally biased stretch (polar residues) spans 861-870 (RSPQSPSQGA). Low complexity predominate over residues 993–1004 (LLLCAPPSSSGP).

This chain is Proline-rich basic protein 1 (PROB1), found in Homo sapiens (Human).